The following is a 212-amino-acid chain: Thymidylate kinase (212 aa).

10–17 is an ATP binding site; that stretch reads GLDGAGKT.

Belongs to the thymidylate kinase family.

The enzyme catalyses dTMP + ATP = dTDP + ADP. Functionally, phosphorylation of dTMP to form dTDP in both de novo and salvage pathways of dTTP synthesis. This Blochmanniella pennsylvanica (strain BPEN) protein is Thymidylate kinase.